A 297-amino-acid polypeptide reads, in one-letter code: Formylmethanofuran--tetrahydromethanopterin formyltransferase (297 aa).

The protein belongs to the FTR family. As to quaternary structure, homotetramer.

The protein localises to the cytoplasm. The catalysed reaction is N-formylmethanofuran + 5,6,7,8-tetrahydromethanopterin + H(+) = N(5)-formyl-5,6,7,8-tetrahydromethanopterin + methanofuran. It participates in one-carbon metabolism; methanogenesis from CO(2); 5,10-methenyl-5,6,7,8-tetrahydromethanopterin from CO(2): step 2/3. In terms of biological role, catalyzes the reversible transfer of a formyl group from formylmethanofuran (formyl-MFR) to tetrahydromethanopterin (H(4)MPT) to produce 5-formyl tetrahydromethanopterin (5-formyl-H(4)MPT) and methanofuran (MFR). The protein is Formylmethanofuran--tetrahydromethanopterin formyltransferase of Methanosarcina barkeri (strain Fusaro / DSM 804).